We begin with the raw amino-acid sequence, 98 residues long: NADH-ubiquinone oxidoreductase chain 4L (98 aa).

The next 3 helical transmembrane spans lie at 2–22 (PSIF…TLVF), 29–49 (SLLC…LIIL), and 61–81 (ILLL…LVMV).

Belongs to the complex I subunit 4L family. Core subunit of respiratory chain NADH dehydrogenase (Complex I) which is composed of 45 different subunits.

It localises to the mitochondrion inner membrane. The catalysed reaction is a ubiquinone + NADH + 5 H(+)(in) = a ubiquinol + NAD(+) + 4 H(+)(out). Functionally, core subunit of the mitochondrial membrane respiratory chain NADH dehydrogenase (Complex I) which catalyzes electron transfer from NADH through the respiratory chain, using ubiquinone as an electron acceptor. Part of the enzyme membrane arm which is embedded in the lipid bilayer and involved in proton translocation. The protein is NADH-ubiquinone oxidoreductase chain 4L (MT-ND4L) of Propithecus tattersalli (Golden-crowned Sifaka).